The following is a 196-amino-acid chain: Peptidyl-tRNA hydrolase (196 aa).

Tyr18 serves as a coordination point for tRNA. The active-site Proton acceptor is His23. TRNA contacts are provided by Phe69, Asn71, and Asn117.

It belongs to the PTH family. In terms of assembly, monomer.

Its subcellular location is the cytoplasm. The enzyme catalyses an N-acyl-L-alpha-aminoacyl-tRNA + H2O = an N-acyl-L-amino acid + a tRNA + H(+). Functionally, hydrolyzes ribosome-free peptidyl-tRNAs (with 1 or more amino acids incorporated), which drop off the ribosome during protein synthesis, or as a result of ribosome stalling. Catalyzes the release of premature peptidyl moieties from peptidyl-tRNA molecules trapped in stalled 50S ribosomal subunits, and thus maintains levels of free tRNAs and 50S ribosomes. The protein is Peptidyl-tRNA hydrolase of Vibrio campbellii (strain ATCC BAA-1116).